Here is a 446-residue protein sequence, read N- to C-terminus: Adenylosuccinate synthetase (446 aa).

Residues 12–18 (GDEGKGK) and 40–42 (GHT) each bind GTP. The active-site Proton acceptor is aspartate 13. Mg(2+)-binding residues include aspartate 13 and glycine 40. IMP is bound by residues 13 to 16 (DEGK), 38 to 41 (NAGH), threonine 128, arginine 142, glutamine 223, threonine 238, and arginine 302. Histidine 41 functions as the Proton donor in the catalytic mechanism. 298–304 (TTTGRRR) contacts substrate. Residues arginine 304, 330–332 (KLD), and 412–414 (SLG) contribute to the GTP site.

This sequence belongs to the adenylosuccinate synthetase family. As to quaternary structure, homodimer. The cofactor is Mg(2+).

It localises to the cytoplasm. It carries out the reaction IMP + L-aspartate + GTP = N(6)-(1,2-dicarboxyethyl)-AMP + GDP + phosphate + 2 H(+). It functions in the pathway purine metabolism; AMP biosynthesis via de novo pathway; AMP from IMP: step 1/2. Plays an important role in the de novo pathway of purine nucleotide biosynthesis. Catalyzes the first committed step in the biosynthesis of AMP from IMP. In Acaryochloris marina (strain MBIC 11017), this protein is Adenylosuccinate synthetase.